The chain runs to 378 residues: Cobalt-precorrin-5B C(1)-methyltransferase (378 aa).

It belongs to the CbiD family.

The enzyme catalyses Co-precorrin-5B + S-adenosyl-L-methionine = Co-precorrin-6A + S-adenosyl-L-homocysteine. Its pathway is cofactor biosynthesis; adenosylcobalamin biosynthesis; cob(II)yrinate a,c-diamide from sirohydrochlorin (anaerobic route): step 6/10. Catalyzes the methylation of C-1 in cobalt-precorrin-5B to form cobalt-precorrin-6A. The sequence is that of Cobalt-precorrin-5B C(1)-methyltransferase from Thermoplasma volcanium (strain ATCC 51530 / DSM 4299 / JCM 9571 / NBRC 15438 / GSS1).